The chain runs to 211 residues: Proteasome subunit beta (211 aa).

Residues 1–9 (MDNDKYLKG) constitute a propeptide, removed in mature form; by autocatalysis. The Nucleophile role is filled by threonine 10.

Belongs to the peptidase T1B family. The 20S proteasome core is composed of 14 alpha and 14 beta subunits that assemble into four stacked heptameric rings, resulting in a barrel-shaped structure. The two inner rings, each composed of seven catalytic beta subunits, are sandwiched by two outer rings, each composed of seven alpha subunits. The catalytic chamber with the active sites is on the inside of the barrel. Has a gated structure, the ends of the cylinder being occluded by the N-termini of the alpha-subunits. Is capped at one or both ends by the proteasome regulatory ATPase, PAN.

The protein resides in the cytoplasm. It carries out the reaction Cleavage of peptide bonds with very broad specificity.. The formation of the proteasomal ATPase PAN-20S proteasome complex, via the docking of the C-termini of PAN into the intersubunit pockets in the alpha-rings, triggers opening of the gate for substrate entry. Interconversion between the open-gate and close-gate conformations leads to a dynamic regulation of the 20S proteasome proteolysis activity. Functionally, component of the proteasome core, a large protease complex with broad specificity involved in protein degradation. This chain is Proteasome subunit beta, found in Methanosarcina barkeri (strain Fusaro / DSM 804).